Here is a 147-residue protein sequence, read N- to C-terminus: Transcriptional regulator MraZ (147 aa).

SpoVT-AbrB domains follow at residues 5 to 52 (SHAI…PETE) and 81 to 124 (ATTL…SEEA).

Belongs to the MraZ family. In terms of assembly, forms oligomers.

Its subcellular location is the cytoplasm. It localises to the nucleoid. This Saccharophagus degradans (strain 2-40 / ATCC 43961 / DSM 17024) protein is Transcriptional regulator MraZ.